The primary structure comprises 259 residues: MWFLILFLALSLGQIDAAPPGQSRVVGGYNCETNSQPWQVAVIGTTFCGGVLIDPSWVITAAHCYSKNYRVLLGRNNLVKDEPFAQRRLVSQSFQHPDYIPVFMRNHTRQRAYDHNNDLMLLHLSKPADITGGVKVIDLPTEEPKVGSICLASGWGMTNPSEMKLSHDLQCVNIHLLSNEKCIETYKNIETDVTLCAGEMDGGKDTCTGDSGGPLICDGVLQGLTSGGATPCAKPKTPAIYAKLIKFTSWIKKVMKENP.

The N-terminal stretch at 1–18 is a signal peptide; that stretch reads MWFLILFLALSLGQIDAA. Positions 19-24 are cleaved as a propeptide — activation peptide; that stretch reads PPGQSR. Residues 25-256 enclose the Peptidase S1 domain; sequence VVGGYNCETN…FTSWIKKVMK (232 aa). 5 cysteine pairs are disulfide-bonded: Cys31-Cys171, Cys48-Cys64, Cys150-Cys217, Cys182-Cys196, and Cys207-Cys232. Catalysis depends on His63, which acts as the Charge relay system. Asn106 carries an N-linked (GlcNAc...) asparagine glycan. Catalysis depends on Asp118, which acts as the Charge relay system. Ser211 (charge relay system) is an active-site residue.

This sequence belongs to the peptidase S1 family. Kallikrein subfamily. Heterodimer of a light chain and heavy chain linked by a disulfide bond.

The enzyme catalyses Preferential cleavage of Arg-|-Xaa bonds in small molecule substrates. Highly selective action to release kallidin (lysyl-bradykinin) from kininogen involves hydrolysis of Met-|-Xaa or Leu-|-Xaa.. Its function is as follows. Glandular kallikreins cleave Met-Lys and Arg-Ser bonds in kininogen to release Lys-bradykinin. This enzyme has a vasoconstrictor activity. KLK-9 has both a chymotrypsin-like and a trypsin-like properties. This is Submandibular glandular kallikrein-9 (Klk9) from Rattus norvegicus (Rat).